A 366-amino-acid polypeptide reads, in one-letter code: Cyclic amide hydrolase (366 aa).

Residues M1–G103 are RU A. Residues R51 and S82 to G83 each bind substrate. An RU B region spans residues R110–P247. K160 is a catalytic residue. Residues R192, S230–A231, R327, and S346–G347 contribute to the substrate site. Residue S230 is the Nucleophile of the active site. The interval F253–A366 is RU C.

This sequence belongs to the cyclic amide hydrolase (CyAH) family. In terms of assembly, homotetramer.

Cyclic amide hydrolase of unknown substrate specificity. Catalyzes the hydrolytic ring-opening of a cyclic amide. Does not act on cyanuric acid nor barbituric acid. This Azorhizobium caulinodans (strain ATCC 43989 / DSM 5975 / JCM 20966 / LMG 6465 / NBRC 14845 / NCIMB 13405 / ORS 571) protein is Cyclic amide hydrolase.